The primary structure comprises 484 residues: Chromosomal replication initiator protein DnaA (484 aa).

The tract at residues 1–73 (MQEGKNIWSL…EILIEKGHNT (73 aa)) is domain I, interacts with DnaA modulators. Positions 73-140 (TINVEFINSP…EEIHTKYRNP (68 aa)) are domain II. Residues 141–357 (FLKKKYTFEN…AAVTKLKAHI (217 aa)) form a domain III, AAA+ region region. Positions 185, 187, 188, and 189 each coordinate ATP. The tract at residues 358-484 (DLEDIEIDTS…IELMNKINKK (127 aa)) is domain IV, binds dsDNA.

Belongs to the DnaA family. Oligomerizes as a right-handed, spiral filament on DNA at oriC.

Its subcellular location is the cytoplasm. In terms of biological role, plays an essential role in the initiation and regulation of chromosomal replication. ATP-DnaA binds to the origin of replication (oriC) to initiate formation of the DNA replication initiation complex once per cell cycle. Binds the DnaA box (a 9 base pair repeat at the origin) and separates the double-stranded (ds)DNA. Forms a right-handed helical filament on oriC DNA; dsDNA binds to the exterior of the filament while single-stranded (ss)DNA is stabiized in the filament's interior. The ATP-DnaA-oriC complex binds and stabilizes one strand of the AT-rich DNA unwinding element (DUE), permitting loading of DNA polymerase. After initiation quickly degrades to an ADP-DnaA complex that is not apt for DNA replication. Binds acidic phospholipids. This chain is Chromosomal replication initiator protein DnaA, found in Borrelia hermsii (strain HS1 / DAH).